The chain runs to 212 residues: Large ribosomal subunit protein uL1 (212 aa).

The protein belongs to the universal ribosomal protein uL1 family. In terms of assembly, part of the 50S ribosomal subunit.

Binds directly to 23S rRNA. Probably involved in E site tRNA release. Its function is as follows. Protein L1 is also a translational repressor protein, it controls the translation of its operon by binding to its mRNA. The polypeptide is Large ribosomal subunit protein uL1 (Halobacterium salinarum (strain ATCC 29341 / DSM 671 / R1)).